The sequence spans 82 residues: Cytochrome c-551 (82 aa).

Residues Cys-12, Cys-15, His-16, and Met-61 each coordinate heme c.

In terms of processing, binds 1 heme c group covalently per subunit.

Its function is as follows. This is a prokaryotic monoheme cytochrome, unreactive with mitochondrial cytochrome C oxidase or reductase. It functions in nitrite and nitrate respiration in Pseudomonas, but it is also found in other bacteria. The polypeptide is Cytochrome c-551 (Ectopseudomonas mendocina (Pseudomonas mendocina)).